The following is a 505-amino-acid chain: Histidine ammonia-lyase (505 aa).

Positions 141 to 143 (ASG) form a cross-link, 5-imidazolinone (Ala-Gly). Ser142 is subject to 2,3-didehydroalanine (Ser).

This sequence belongs to the PAL/histidase family. Contains an active site 4-methylidene-imidazol-5-one (MIO), which is formed autocatalytically by cyclization and dehydration of residues Ala-Ser-Gly.

Its subcellular location is the cytoplasm. It carries out the reaction L-histidine = trans-urocanate + NH4(+). It functions in the pathway amino-acid degradation; L-histidine degradation into L-glutamate; N-formimidoyl-L-glutamate from L-histidine: step 1/3. This Bacillus thuringiensis (strain Al Hakam) protein is Histidine ammonia-lyase.